Here is a 597-residue protein sequence, read N- to C-terminus: Probable translation initiation factor IF-2 (597 aa).

One can recognise a tr-type G domain in the interval 10–226 (LRTPIVAVLG…LMGLSQRFMK (217 aa)). A G1 region spans residues 19 to 26 (GHVDHGKT). 19–26 (GHVDHGKT) is a binding site for GTP. The G2 stretch occupies residues 44 to 48 (AITQH). A G3 region spans residues 81–84 (DTPG). Residues 81–85 (DTPGH) and 135–138 (NKVD) contribute to the GTP site. The segment at 135–138 (NKVD) is G4. The tract at residues 203 to 205 (SAI) is G5.

The protein belongs to the TRAFAC class translation factor GTPase superfamily. Classic translation factor GTPase family. IF-2 subfamily.

In terms of biological role, function in general translation initiation by promoting the binding of the formylmethionine-tRNA to ribosomes. Seems to function along with eIF-2. The chain is Probable translation initiation factor IF-2 from Halorubrum lacusprofundi (strain ATCC 49239 / DSM 5036 / JCM 8891 / ACAM 34).